The chain runs to 245 residues: 1-(5-phosphoribosyl)-5-[(5-phosphoribosylamino)methylideneamino] imidazole-4-carboxamide isomerase (245 aa).

The active-site Proton acceptor is Asp7. The active-site Proton donor is the Asp129.

This sequence belongs to the HisA/HisF family.

It localises to the cytoplasm. The enzyme catalyses 1-(5-phospho-beta-D-ribosyl)-5-[(5-phospho-beta-D-ribosylamino)methylideneamino]imidazole-4-carboxamide = 5-[(5-phospho-1-deoxy-D-ribulos-1-ylimino)methylamino]-1-(5-phospho-beta-D-ribosyl)imidazole-4-carboxamide. Its pathway is amino-acid biosynthesis; L-histidine biosynthesis; L-histidine from 5-phospho-alpha-D-ribose 1-diphosphate: step 4/9. This chain is 1-(5-phosphoribosyl)-5-[(5-phosphoribosylamino)methylideneamino] imidazole-4-carboxamide isomerase, found in Escherichia coli (strain ATCC 8739 / DSM 1576 / NBRC 3972 / NCIMB 8545 / WDCM 00012 / Crooks).